The sequence spans 337 residues: MAFLSQLNLQEILQTLSVLQWMPVYVFLGAIPIIVIPYFLVFTKFWMVSVLALAWLAYDWNTHSQGGRRSAWVRNWTIWKYFQNYFPIKLVKTHDLSPRHNYIIASHPHGVLPYGTFINFATETTGFARIFPGITPYVATLEGIFWIPIVREYVMSMGVCPVSELALKYLLTQKGSGNAVVIMVGGGAEALLCHPGATTVLLKQRKGFVKVALETGAYLVPSYSFGQNEVHNQETFPEGTWKRFFQKALQDTLKKLLRLSVCTFHGRGLTRGSWGFLPFNHPITTVVGEPLPIPRIKKPNEETVDKYHALYINALQKLFDEHKVQYGLSETQELTII.

A run of 2 helical transmembrane segments spans residues 22–42 and 102–122; these read MPVY…FLVF and YIIA…NFAT.

Belongs to the diacylglycerol acyltransferase family.

Its subcellular location is the endoplasmic reticulum membrane. The catalysed reaction is 1,2-di-(9Z-octadecenoyl)-sn-glycerol + (9Z)-octadecenoyl-CoA = 1,2,3-tri-(9Z-octadecenoyl)-glycerol + CoA. Diglyceride acyltransferase that uses fatty acyl-CoA as substrate. Particularly active with oleate as a substrate. Has no wax synthase activity to produce wax esters. The sequence is that of Diacylglycerol O-acyltransferase 2-like protein 6 (DGAT2L6) from Bos taurus (Bovine).